A 36-amino-acid chain; its full sequence is Glucagon (36 aa).

The protein belongs to the glucagon family. Produced by the X-cells of the islets of pancreas.

It is found in the secreted. Functionally, promotes hydrolysis of glycogen and lipids, and raises the blood sugar level. In Hydrolagus colliei (Spotted ratfish), this protein is Glucagon (gcg).